The primary structure comprises 525 residues: AP-4 complex accessory subunit Tepsin (525 aa).

Positions 8 to 141 constitute an ENTH domain; the sequence is RDRLSFLHRL…FSDTVLPLAP (134 aa). Positions 139–229 are disordered; sequence LAPSQPLGTP…SHSGASREPG (91 aa). Positions 193–225 are enriched in low complexity; it reads SGPSSQNSSQNSDLSRVSDSGSHSGSDSHSGAS. A phosphoserine mark is found at S333 and S356. A disordered region spans residues 355-465; the sequence is LSPARGTSAE…PKRGPSSCAW (111 aa). Positions 393 to 412 are enriched in low complexity; the sequence is PLSSTPVSSRSPAPSSGMPS. Over residues 413 to 429 the composition is skewed to pro residues; that stretch reads SPVPTPPPDASPIPAPG. Positions 434 to 448 are enriched in basic and acidic residues; it reads AEARLAESRRWRPER. The interaction with AP4B1 stretch occupies residues 467-477; it reads RDSLFAGMELV. A disordered region spans residues 487-525; that stretch reads AAAGESCPDAPRAPQTSSQRTAAKEPPGSEPSAFAFLNA. Residues 515 to 525 form an interaction with AP4E1 region; it reads SEPSAFAFLNA.

As to quaternary structure, interacts with AP4B1 and AP4E1; the interaction is direct and mediates the association of TEPSIN with the adapter-like complex 4 (AP-4), a heterotetramer composed of AP4B1, AP4E1, AP4M1 and AP4S1.

The protein resides in the golgi apparatus. The protein localises to the trans-Golgi network membrane. Its subcellular location is the cytoplasmic vesicle. It is found in the cytoplasm. It localises to the cytosol. Its function is as follows. Associates with the adapter-like complex 4 (AP-4) and may therefore play a role in vesicular trafficking of proteins at the trans-Golgi network. The sequence is that of AP-4 complex accessory subunit Tepsin from Homo sapiens (Human).